Here is a 1427-residue protein sequence, read N- to C-terminus: DNA-directed RNA polymerase subunit beta' (1427 aa).

Zn(2+) is bound by residues Cys-66, Cys-68, Cys-81, and Cys-84. Mg(2+) is bound by residues Asp-472, Asp-474, and Asp-476. Residues Cys-815, Cys-889, Cys-896, and Cys-899 each contribute to the Zn(2+) site.

Belongs to the RNA polymerase beta' chain family. The RNAP catalytic core consists of 2 alpha, 1 beta, 1 beta' and 1 omega subunit. When a sigma factor is associated with the core the holoenzyme is formed, which can initiate transcription. The cofactor is Mg(2+). It depends on Zn(2+) as a cofactor.

The catalysed reaction is RNA(n) + a ribonucleoside 5'-triphosphate = RNA(n+1) + diphosphate. Its function is as follows. DNA-dependent RNA polymerase catalyzes the transcription of DNA into RNA using the four ribonucleoside triphosphates as substrates. The protein is DNA-directed RNA polymerase subunit beta' of Bacteroides fragilis (strain ATCC 25285 / DSM 2151 / CCUG 4856 / JCM 11019 / LMG 10263 / NCTC 9343 / Onslow / VPI 2553 / EN-2).